The chain runs to 308 residues: GTP-binding protein RAD (308 aa).

A compositionally biased stretch (gly residues) spans 1–16 (MTLNGGGSGAGGSRGG). A disordered region spans residues 1–88 (MTLNGGGSGA…SLSSGGSDSD (88 aa)). Residue R24 is modified to Omega-N-methylarginine. Residue S26 is modified to Phosphoserine. The span at 48–68 (QAALTPGALTAAAAGTGTQGP) shows a compositional bias: low complexity. GTP-binding positions include 98 to 105 (GAPGVGKS) and 203 to 206 (NKSD). The calmodulin-binding stretch occupies residues 278-297 (AKRFLGRIVARNSRKMAFRA).

Belongs to the small GTPase superfamily. RGK family. In terms of assembly, interacts with calmodulin preferentially in the inactive, GDP-bound form. Binds CAMKII which is capable of phosphorylating RAD in vitro. Interacts with CAMK2D. Interacts with CACNB2; interaction may be involved in beta-adrenergic regulation of heart rate and contractile force. Interaction with CACNB2 regulates the trafficking of CACNA1C to the cell membrane. As to expression, most abundantly expressed in the heart. Also found in the skeletal muscle and lung. Lesser amounts in placenta and kidney. Also detected in adipose tissue. Overexpressed in muscle of type II diabetic humans.

It localises to the cell membrane. May regulate basal voltage-dependent L-type Ca(2+) currents and be required for beta-adrenergic augmentation of Ca(2+) influx in cardiomyocytes, thereby regulating increases in heart rate and contractile force. May play an important role in cardiac antiarrhythmia via the strong suppression of voltage-gated L-type Ca(2+) currents. Regulates voltage-dependent L-type calcium channel subunit alpha-1C trafficking to the cell membrane. Inhibits cardiac hypertrophy through the calmodulin-dependent kinase II (CaMKII) pathway. Inhibits phosphorylation and activation of CAMK2D. The chain is GTP-binding protein RAD (RRAD) from Homo sapiens (Human).